Reading from the N-terminus, the 118-residue chain is MKRIAFVFSTAPHGSTSGREGLDALLATSALTEALGVFFISDGVFQLLPGQKPDAVLARDYIATFKLFDLYDIDQCWICAASLRERGLENVNFVVDATPLEPVALRRELGNYDVILRF.

It belongs to the DsrF/TusC family. As to quaternary structure, heterohexamer, formed by a dimer of trimers. The hexameric TusBCD complex contains 2 copies each of TusB, TusC and TusD. The TusBCD complex interacts with TusE.

The protein resides in the cytoplasm. In terms of biological role, part of a sulfur-relay system required for 2-thiolation of 5-methylaminomethyl-2-thiouridine (mnm(5)s(2)U) at tRNA wobble positions. The sequence is that of Protein TusC from Salmonella paratyphi C (strain RKS4594).